Reading from the N-terminus, the 351-residue chain is MKKSTLALVVMGIVASASVQAAEIYNKDGNKLDVYGKVKAMHYMSDNASKDGDQSYIRFGFKGETQINDQLTGYGRWEAEFAGNKAESDTAQQKTRLAFAGLKYKDLGSFDYGRNLGALYDVEAWTDMFPEFGGDSSAQTDNFMTKRASGLATYRNTDFFGVIDGLNLTLQYQGKNENRDVKKQNGDGFGTSLTYDFGGSDFAISGAYTNSDRTNEQNLQSRGTGKRAEAWATGLKYDANNIYLATFYSETRKMTPITGGFANKTQNFEAVAQYQFDFGLRPSLGYVLSKGKDIEGIGDEDLVNYIDVGATYYFNKNMSAFVDYKINQLDSDNKLNINNDDIVAVGMTYQF.

A signal peptide spans 1 to 21 (MKKSTLALVVMGIVASASVQA).

This sequence belongs to the Gram-negative porin family. In terms of assembly, homotrimer. Forms mixed heterotrimers with OmpC and with OmpF; other mixed heterotrimers are also probable.

The protein resides in the cell outer membrane. In terms of biological role, uptake of inorganic phosphate, phosphorylated compounds, and some other negatively charged solutes. This Escherichia coli (strain K12) protein is Outer membrane porin PhoE (phoE).